A 331-amino-acid chain; its full sequence is Anthranilate phosphoribosyltransferase (331 aa).

Residues glycine 78, 81-82 (GD), threonine 86, 88-91 (NVST), 106-114 (KHGNYSVSS), and serine 118 each bind 5-phospho-alpha-D-ribose 1-diphosphate. Residue glycine 78 coordinates anthranilate. Serine 90 serves as a coordination point for Mg(2+). Asparagine 109 serves as a coordination point for anthranilate. Arginine 164 serves as a coordination point for anthranilate. Residues aspartate 222 and glutamate 223 each contribute to the Mg(2+) site.

Belongs to the anthranilate phosphoribosyltransferase family. As to quaternary structure, homodimer. The cofactor is Mg(2+).

The catalysed reaction is N-(5-phospho-beta-D-ribosyl)anthranilate + diphosphate = 5-phospho-alpha-D-ribose 1-diphosphate + anthranilate. The protein operates within amino-acid biosynthesis; L-tryptophan biosynthesis; L-tryptophan from chorismate: step 2/5. Functionally, catalyzes the transfer of the phosphoribosyl group of 5-phosphorylribose-1-pyrophosphate (PRPP) to anthranilate to yield N-(5'-phosphoribosyl)-anthranilate (PRA). The sequence is that of Anthranilate phosphoribosyltransferase from Haloarcula marismortui (strain ATCC 43049 / DSM 3752 / JCM 8966 / VKM B-1809) (Halobacterium marismortui).